Here is a 384-residue protein sequence, read N- to C-terminus: Putative 8-amino-7-oxononanoate synthase (384 aa).

Residue Arg19 participates in substrate binding. Pyridoxal 5'-phosphate is bound at residue 106-107; the sequence is GY. Residue His131 participates in substrate binding. Residues Ser177, 202 to 205, and 233 to 236 each bind pyridoxal 5'-phosphate; these read DDAH and TLSK. Lys236 is modified (N6-(pyridoxal phosphate)lysine).

This sequence belongs to the class-II pyridoxal-phosphate-dependent aminotransferase family. BioF subfamily. In terms of assembly, homodimer. The cofactor is pyridoxal 5'-phosphate.

The enzyme catalyses 6-carboxyhexanoyl-[ACP] + L-alanine + H(+) = (8S)-8-amino-7-oxononanoate + holo-[ACP] + CO2. The protein operates within cofactor biosynthesis; biotin biosynthesis. Catalyzes the decarboxylative condensation of pimeloyl-[acyl-carrier protein] and L-alanine to produce 8-amino-7-oxononanoate (AON), [acyl-carrier protein], and carbon dioxide. The polypeptide is Putative 8-amino-7-oxononanoate synthase (bioF) (Desulforudis audaxviator (strain MP104C)).